Reading from the N-terminus, the 36-residue chain is uncharacterized protein (36 aa).

This is an uncharacterized protein from Archaeoglobus fulgidus (strain ATCC 49558 / DSM 4304 / JCM 9628 / NBRC 100126 / VC-16).